Here is a 488-residue protein sequence, read N- to C-terminus: Histone deacetylase 2 (488 aa).

The tract at residues 9–322 is histone deacetylase; it reads KKKVCYYYDG…WTYETAVALD (314 aa). 1D-myo-inositol 1,4,5,6-tetrakisphosphate-binding residues include Gly-28 and Lys-32. At Lys-75 the chain carries N6-acetyllysine; alternate. Lys-75 is covalently cross-linked (Glycyl lysine isopeptide (Lys-Gly) (interchain with G-Cter in SUMO2); alternate). His-142 is a catalytic residue. Asp-175, Asp-177, His-179, Phe-188, Thr-191, Val-194, Ser-198, and Phe-199 together coordinate Ca(2+). Residues Asp-177 and His-179 each contribute to the Zn(2+) site. N6-acetyllysine is present on Lys-221. Tyr-223 contributes to the Ca(2+) binding site. Cys-262 carries the S-nitrosocysteine modification. A Zn(2+)-binding site is contributed by Asp-265. 1D-myo-inositol 1,4,5,6-tetrakisphosphate is bound at residue Arg-271. Cys-274 is subject to S-nitrosocysteine. The disordered stretch occupies residues 389–488; the sequence is AVHEDSGDED…GTKSEQLSNP (100 aa). Phosphoserine is present on residues Ser-394, Ser-407, Ser-422, and Ser-424. Positions 402 to 417 are enriched in basic and acidic residues; the sequence is PDKRISIRASDKRIAC. A compositionally biased stretch (acidic residues) spans 418–428; sequence DEEFSDSEDEG. A compositionally biased stretch (basic and acidic residues) spans 429 to 481; sequence EGGRRNVADHKKGAKKARIEEDKKETEDKKTDVKEEDKSKDNSGEKTDTKGTK. Residues Lys-439, Lys-452, Lys-458, Lys-462, Lys-478, and Lys-481 each participate in a glycyl lysine isopeptide (Lys-Gly) (interchain with G-Cter in SUMO2) cross-link.

This sequence belongs to the histone deacetylase family. HD type 1 subfamily. In terms of assembly, part of the core histone deacetylase (HDAC) complex composed of HDAC1, HDAC2, RBBP4 and RBBP7, the core complex associates with SIN3, SAP18 and SAP30 to form the SIN3 HDAC complex. Component of the nucleosome remodeling and deacetylase (NuRD) repressor complex, composed of core proteins MTA1, MTA2, MTA3, RBBP4, RBBP7, HDAC1, HDAC2, MBD2, MBD3, and peripherally associated proteins CDK2AP1, CDK2AP2, GATAD2A, GATAD2B, CHD3, CHD4 and CHD5. The exact stoichiometry of the NuRD complex is unknown, and some subunits such as MBD2 and MBD3, GATAD2A and GATAD2B, and CHD3, CHD4 and CHD5 define mutually exclusive NuRD complexes. Component of a RCOR/GFI/KDM1A/HDAC complex. Component of a BHC histone deacetylase complex that contains HDAC1, HDAC2, HMG20B, KDM1A, RCOR1 and PHF21A. The BHC complex may also contain ZMYM2, ZNF217, ZMYM3, GSE1 and GTF2I. Part of a complex containing the core histones H2A, H2B, H3 and H4, DEK and unphosphorylated DAXX. Part of a complex containing ATR and CHD4. Forms a heterologous complex at least with YY1. Interacts in the late S-phase of DNA-replication with DNMT1 in the other transcriptional repressor complex composed of DNMT1, DMAP1, PCNA, CAF1. Component of a mSin3A corepressor complex that contains SIN3A, SAP130, SUDS3, ARID4B, HDAC1 and HDAC2. Part of a complex composed of TRIM28, HDAC1, HDAC2 and EHMT2. Part of a complex containing at least CDYL, MIER1, MIER2, HDAC1 and HDAC2. Component of a histone deacetylase complex containing DNTTIP1, ZNF541, HDAC1 and HDAC2. Forms a complex comprising APPL1, RUVBL2, APPL2, CTNNB1 and HDAC1. Interacts directly with GFI1. Interacts directly with GFI1B. Interacts with APEX1; the interaction is not dependent on the acetylated status of APEX1. Interacts with ATR. Interacts with BCL6 (non-acetylated form). Interacts with BEND3. Interacts with CBFA2T3. Interacts with CDK2AP1. Interacts with CHD4. Interacts with CHD5. Interacts with CHFR. Interacts with CRY1. Interacts with DNMT1. Interacts with GATAD2A. Interacts with HCFC1. Interacts with HDAC7. Interacts with HDAC10. Interacts with INSM1. Interacts with KDM4A. Interacts with MACROH2A1 (via the non-histone region). Interacts with MBD3L2. Interacts with MTA1, with a preference for sumoylated MTA1. Interacts with NACC2. Interacts with NRIP1. Interacts with PELP1. Interacts with PIMREG. Interacts with PRDM6. Interacts with PWWP2B. Interacts with SAP30. Interacts with SAP30L. Interacts with SETDB1. Interacts with SIX3. Interacts with SMARCAD1. Interacts with SNW1. Interacts with SPHK2. Interacts with SPEN/MINT. Interacts (CK2 phosphorylated form) with SP3. Interacts with SUV39H1. Interacts with TSHZ3 (via its N-terminus). Interacts with ZMYND8. Interacts with ZNF431. Interacts with ZNF263; recruited to the SIX3 promoter along with other proteins involved in chromatin modification and transcriptional corepression where it contributes to transcriptional repression. Identified in a complex with HDAC1, KCTD19, DNTTIP1 and ZNF541. Component of the SIN3B complex, which includes SIN3B, HDAC2, PHF12 and MORF4L1; interacts directly with all subunits. Zn(2+) is required as a cofactor. Ca(2+) serves as cofactor. S-nitrosylated by GAPDH. In neurons, S-nitrosylation at Cys-262 and Cys-274 does not affect enzyme activity, but induces HDAC2 release from chromatin. This in turn increases acetylation of histones surrounding neurotrophin-dependent gene promoters and promotes their transcription. In embryonic cortical neurons, S-Nitrosylation regulates dendritic growth and branching. As to expression, widely expressed; lower levels in brain and lung.

Its subcellular location is the nucleus. It is found in the cytoplasm. The enzyme catalyses N(6)-acetyl-L-lysyl-[histone] + H2O = L-lysyl-[histone] + acetate. It carries out the reaction N(6)-acetyl-L-lysyl-[protein] + H2O = L-lysyl-[protein] + acetate. The catalysed reaction is N(6)-(2E)-butenoyl-L-lysyl-[protein] + H2O = (2E)-2-butenoate + L-lysyl-[protein]. It catalyses the reaction N(6)-(2-hydroxyisobutanoyl)-L-lysyl-[protein] + H2O = 2-hydroxy-2-methylpropanoate + L-lysyl-[protein]. The enzyme catalyses N(6)-[(S)-lactoyl]-L-lysyl-[protein] + H2O = (S)-lactate + L-lysyl-[protein]. Inositol tetraphosphate (1D-myo-inositol 1,4,5,6-tetrakisphosphate) may act as an intermolecular glue between HDAC2 and N-Cor repressor complex components. Its function is as follows. Histone deacetylase that catalyzes the deacetylation of lysine residues on the N-terminal part of the core histones (H2A, H2B, H3 and H4). Histone deacetylation gives a tag for epigenetic repression and plays an important role in transcriptional regulation, cell cycle progression and developmental events. Histone deacetylases act via the formation of large multiprotein complexes. Forms transcriptional repressor complexes by associating with MAD, SIN3, YY1 and N-COR. Component of a RCOR/GFI/KDM1A/HDAC complex that suppresses, via histone deacetylase (HDAC) recruitment, a number of genes implicated in multilineage blood cell development. Acts as a component of the histone deacetylase NuRD complex which participates in the remodeling of chromatin. Component of the SIN3B complex that represses transcription and counteracts the histone acetyltransferase activity of EP300 through the recognition H3K27ac marks by PHF12 and the activity of the histone deacetylase HDAC2. Also deacetylates non-histone targets: deacetylates TSHZ3, thereby regulating its transcriptional repressor activity. May be involved in the transcriptional repression of circadian target genes, such as PER1, mediated by CRY1 through histone deacetylation. Involved in MTA1-mediated transcriptional corepression of TFF1 and CDKN1A. In addition to protein deacetylase activity, also acts as a protein-lysine deacylase by recognizing other acyl groups: catalyzes removal of (2E)-butenoyl (crotonyl), lactoyl (lactyl) and 2-hydroxyisobutanoyl (2-hydroxyisobutyryl) acyl groups from lysine residues, leading to protein decrotonylation, delactylation and de-2-hydroxyisobutyrylation, respectively. This Homo sapiens (Human) protein is Histone deacetylase 2.